Consider the following 881-residue polypeptide: Alanine--tRNA ligase (881 aa).

Zn(2+) is bound by residues His568, His572, Cys670, and His674.

Belongs to the class-II aminoacyl-tRNA synthetase family. It depends on Zn(2+) as a cofactor.

The protein resides in the cytoplasm. The catalysed reaction is tRNA(Ala) + L-alanine + ATP = L-alanyl-tRNA(Ala) + AMP + diphosphate. Functionally, catalyzes the attachment of alanine to tRNA(Ala) in a two-step reaction: alanine is first activated by ATP to form Ala-AMP and then transferred to the acceptor end of tRNA(Ala). Also edits incorrectly charged Ser-tRNA(Ala) and Gly-tRNA(Ala) via its editing domain. The chain is Alanine--tRNA ligase from Moorella thermoacetica (strain ATCC 39073 / JCM 9320).